A 591-amino-acid polypeptide reads, in one-letter code: L-fucose isomerase (591 aa).

Catalysis depends on proton acceptor residues glutamate 337 and aspartate 361. Mn(2+) contacts are provided by glutamate 337, aspartate 361, and histidine 528.

Belongs to the L-fucose isomerase family. As to quaternary structure, homohexamer. Mn(2+) serves as cofactor.

The protein localises to the cytoplasm. The enzyme catalyses L-fucose = L-fuculose. The protein operates within carbohydrate degradation; L-fucose degradation; L-lactaldehyde and glycerone phosphate from L-fucose: step 1/3. Converts the aldose L-fucose into the corresponding ketose L-fuculose. This Escherichia coli (strain SMS-3-5 / SECEC) protein is L-fucose isomerase.